The chain runs to 706 residues: Glycylpeptide N-tetradecanoyltransferase (706 aa).

The tract at residues Met-1–Lys-119 is disordered. Residues Thr-7–Pro-42 show a composition bias toward low complexity. The span at Glu-47 to Gly-65 shows a compositional bias: acidic residues. Basic residues predominate over residues Lys-78 to Leu-95. Residues His-180–Trp-183, Leu-317–Val-319, and Ser-325–Ala-329 contribute to the tetradecanoyl-CoA site. Val-706 serves as the catalytic Proton acceptor; via carboxylate.

This sequence belongs to the NMT family. Monomer.

The protein localises to the cytoplasm. It carries out the reaction N-terminal glycyl-[protein] + tetradecanoyl-CoA = N-tetradecanoylglycyl-[protein] + CoA + H(+). Functionally, adds a myristoyl group to the N-terminal glycine residue of certain cellular proteins. The sequence is that of Glycylpeptide N-tetradecanoyltransferase (NMT1) from Mycosarcoma maydis (Corn smut fungus).